Reading from the N-terminus, the 353-residue chain is Photosystem II protein D1 (353 aa).

An N-acetylthreonine modification is found at threonine 2. A Phosphothreonine modification is found at threonine 2. 3 helical membrane-spanning segments follow: residues 29-46 (YIGW…TATS), 118-133 (HFLL…EWEL), and 142-156 (WIAV…AAAA). Histidine 118 contacts chlorophyll a. Pheophytin a is bound at residue tyrosine 126. Residues aspartate 170 and glutamate 189 each coordinate [CaMn4O5] cluster. Residues 197 to 218 (FHMLGVAGVFGGSLFSAMHGSL) traverse the membrane as a helical segment. Residue histidine 198 participates in chlorophyll a binding. Residues histidine 215 and 264-265 (SF) each bind a quinone. Histidine 215 lines the Fe cation pocket. Residue histidine 272 participates in Fe cation binding. The chain crosses the membrane as a helical span at residues 274–288 (FLAAWPVVGIWFTAL). [CaMn4O5] cluster is bound by residues histidine 332, glutamate 333, aspartate 342, and alanine 344. Residues 345–353 (AVEAPSING) constitute a propeptide that is removed on maturation.

The protein belongs to the reaction center PufL/M/PsbA/D family. PSII is composed of 1 copy each of membrane proteins PsbA, PsbB, PsbC, PsbD, PsbE, PsbF, PsbH, PsbI, PsbJ, PsbK, PsbL, PsbM, PsbT, PsbX, PsbY, PsbZ, Psb30/Ycf12, at least 3 peripheral proteins of the oxygen-evolving complex and a large number of cofactors. It forms dimeric complexes. It depends on The D1/D2 heterodimer binds P680, chlorophylls that are the primary electron donor of PSII, and subsequent electron acceptors. It shares a non-heme iron and each subunit binds pheophytin, quinone, additional chlorophylls, carotenoids and lipids. D1 provides most of the ligands for the Mn4-Ca-O5 cluster of the oxygen-evolving complex (OEC). There is also a Cl(-1) ion associated with D1 and D2, which is required for oxygen evolution. The PSII complex binds additional chlorophylls, carotenoids and specific lipids. as a cofactor. In terms of processing, tyr-161 forms a radical intermediate that is referred to as redox-active TyrZ, YZ or Y-Z. Post-translationally, C-terminally processed by CTPA; processing is essential to allow assembly of the oxygen-evolving complex and thus photosynthetic growth.

Its subcellular location is the plastid. It localises to the chloroplast thylakoid membrane. It catalyses the reaction 2 a plastoquinone + 4 hnu + 2 H2O = 2 a plastoquinol + O2. Its function is as follows. Photosystem II (PSII) is a light-driven water:plastoquinone oxidoreductase that uses light energy to abstract electrons from H(2)O, generating O(2) and a proton gradient subsequently used for ATP formation. It consists of a core antenna complex that captures photons, and an electron transfer chain that converts photonic excitation into a charge separation. The D1/D2 (PsbA/PsbD) reaction center heterodimer binds P680, the primary electron donor of PSII as well as several subsequent electron acceptors. This Vitis vinifera (Grape) protein is Photosystem II protein D1.